Consider the following 1373-residue polypeptide: MVSLRDNIEAQPLSHNRRIRKNFGHINLVADIPNLIEIQKNSYEKNFLQLNIKDSERKNKGLQSILNSIFPISDSSNIANLEFVKYEFDTPKYDVEECSQRSLSYAAPLKVTLRLSIWDIDEDTGTREIKGIKEQEVYMGDIPLMTKNGTFIINGTERVVVSQMHRSPGVFFYHDEGKVHSSGKLLYSARVIPYRGSWLDLEFDAKDVIYFRIDRKRKLYTTTLLRAIGMSTEEIIKFYYNSVTYKLVKNKGWAVKFIPQHITAHRLTSDLVDADTGNILLKAGQKITPRLAKKYSGEGLNNILVAHETLIGKYLSEDLRDPASDEVLAKIGEMITADMLNVINDLKIKNVNVLVINPQSGPYIRNTLFADKNQDREAALCDIFRVLRPGEPANIEAAESLFYNLFFDTERYDLSEVGRIKMNSRLELNISEEVTVLTIDDIKNIVRVLVELKDGKGIIDDIDHLGNRRVRSVGELIENQFRIGLVRMEKSVIERMSAGDVDTVMPHDLVNSKILVSVVKEFFSTSQLSQFMDQTNPLSEITHKRRLSALGPGGLSRDRAGFEVRDVHPTHYGRICPIETPEGQNIGLINSMATYARINKHGFIESPYRRVKDGCVTDEVVYLSAIEEGKYKIGQANSKINKDGKLQGEFINCRVEGGNFVMVEPYEVDFIDVTPMQVVSVAASLIPFLENDDANRALMGSNMQRQAVPLIKTDAPFVGTGVEGVVAKDSGASVLALHDGIVEQVDSNRIVIRTLEQKVDGSPSVDIYNLLKFQKSNHNTCINQKPLVKVGHYVKKNDIIADGPSTDNGEIALGRNVLVAFLPWNGYNFEDSILISERIVKEDVFTSIHIEEFEVIARDTRLGPEEITRDIPNVSEEALRHLDEVGIIYIGAEVKAGDILVGKVTPKSESPITPEEKLLRAIFGEKAFDVKDSSLHVPSGVSGTVVEVRVFSRRGVEKDQRAIAIEKQQIEKFAKDRDDELEIIEHFVFSWLEKLLVGQVIINGPKQVKVGQTITTEMLKGLSKGQFWQIIVEDANVMNEIEQIKTHYDEKKEALDKRFATKVEKLQSGDDLPQGALKVVKVFIATKHKLQPGDKMAGRHGNKGVISRIVPEEDMPFLEDGTVVDIVLNPLGLPSRMNIGQILETHLGWASINLAKKISTLVKEYKNKHIGIEQIKKFLIELYGENINSILERPEEEIISFCKKVSKGVHFATPVFDGAKVQDVKDMLKLAGQDPSGQVKLIDGRTGEYFDRLVTVGQKYLLKLHHLVDNKIHSRSIGPYSLVTQQPLGGKSHFGGQRFGEMECWALQAYGAAYTLQEMLTVKSDDVNGRIKTYDSIVRGENNFESGIPESFNVMIKEFRSLCLNVKLEVTSS.

This sequence belongs to the RNA polymerase beta chain family. In terms of assembly, the RNAP catalytic core consists of 2 alpha, 1 beta, 1 beta' and 1 omega subunit. When a sigma factor is associated with the core the holoenzyme is formed, which can initiate transcription.

The catalysed reaction is RNA(n) + a ribonucleoside 5'-triphosphate = RNA(n+1) + diphosphate. In terms of biological role, DNA-dependent RNA polymerase catalyzes the transcription of DNA into RNA using the four ribonucleoside triphosphates as substrates. This chain is DNA-directed RNA polymerase subunit beta, found in Rickettsia conorii (strain ATCC VR-613 / Malish 7).